Consider the following 591-residue polypeptide: L-fucose isomerase (591 aa).

Active-site proton acceptor residues include Glu337 and Asp361. 3 residues coordinate Mn(2+): Glu337, Asp361, and His528.

Belongs to the L-fucose isomerase family. As to quaternary structure, homohexamer. Requires Mn(2+) as cofactor.

Its subcellular location is the cytoplasm. The catalysed reaction is L-fucose = L-fuculose. It participates in carbohydrate degradation; L-fucose degradation; L-lactaldehyde and glycerone phosphate from L-fucose: step 1/3. Its function is as follows. Converts the aldose L-fucose into the corresponding ketose L-fuculose. This chain is L-fucose isomerase, found in Escherichia coli (strain SMS-3-5 / SECEC).